Reading from the N-terminus, the 479-residue chain is Neuronal acetylcholine receptor subunit alpha-9 (479 aa).

Positions 1 to 25 (MNRPHSCLSFCWMYFAASGIRAVET) are cleaved as a signal peptide. Topologically, residues 26 to 237 (ANGKYAQKLF…TFTLLLKRRS (212 aa)) are extracellular. Asn57 carries N-linked (GlcNAc...) asparagine glycosylation. A disulfide bond links Cys155 and Cys169. Asn170 carries N-linked (GlcNAc...) asparagine glycosylation. Residues Ser191 and Asp193 each coordinate Na(+). Cys219 and Cys220 are disulfide-bonded. Transmembrane regions (helical) follow at residues 238–262 (SFYI…FYLP), 269–287 (VSLG…LMVA), and 302–323 (YYIA…VMNI). Residues 324-457 (HFCGAEARPV…WKKVAKVIDR (134 aa)) lie on the Cytoplasmic side of the membrane. The chain crosses the membrane as a helical span at residues 458 to 476 (FFMWIFFAMVFVMTVLIIA).

This sequence belongs to the ligand-gated ion channel (TC 1.A.9) family. Acetylcholine receptor (TC 1.A.9.1) subfamily. Alpha-9/CHRNA9 sub-subfamily. In terms of assembly, forms homo- or heterooligomeric channels in conjunction with CHRNA10. The native outer hair cell receptor may be composed of CHRNA9:CHRNA10 heterooligomers. Found in the stoichiometric form (CHRNA9)2:(CHRNA10)3. In terms of tissue distribution, detected in the nasal epithelium, in the outer hair cells of the cochlea, in the pars tuberalis of the hypophysis, and in the developing muscle of the tongue. Also expressed in the neurons of dorsal root ganglia.

It is found in the synaptic cell membrane. The protein resides in the cell membrane. It carries out the reaction Ca(2+)(in) = Ca(2+)(out). It catalyses the reaction Mg(2+)(in) = Mg(2+)(out). The enzyme catalyses K(+)(in) = K(+)(out). The catalysed reaction is Na(+)(in) = Na(+)(out). Activated by a myriad of ligands such as acetylcholine. AChR activity is inhibited by the antagonist alpha-conotoxins RgIA and GeXXA, small disulfide-constrained peptides from cone snails. Functionally, component of neuronal acetylcholine receptors (nAChRs) that function as pentameric, ligand-gated cation channels with high calcium permeability among other activities. nAChRs are excitatory neurotrasnmitter receptors formed by a collection of nAChR subunits known to mediate synaptic transmission in the nervous system and the neuromuscular junction. Each nAchR subunit confers differential attributes to channel properties, including activation, deactivation and desensitization kinetics, pH sensitivity, cation permeability, and binding to allosteric modulators. Forms either homopentamers or heteropentamers with CHRNA10. Expressed in the inner ear, in sympathetic neurons and in other non-neuronal cells, such as skin keratinocytes and lymphocytes. nAChR formed by CHRNA9:CHRNA10 mediate central nervous system control of auditory and vestibular sensory processing. The channel is permeable to a range of divalent cations including calcium, the influx of which may activate a potassium current which hyperpolarizes the cell membrane. In the ear, mediates synaptic transmission between efferent olivocochlear fibers and hair cells of the cochlea, this may lead to a reduction in basilar membrane motion, altering the activity of auditory nerve fibers and reducing the range of dynamic hearing. This may protect against acoustic trauma. May also regulate keratinocyte adhesion. The chain is Neuronal acetylcholine receptor subunit alpha-9 (Chrna9) from Rattus norvegicus (Rat).